The sequence spans 371 residues: Cytochrome b (371 aa).

The next 4 helical transmembrane spans lie at 25–45 (FGSMLLTCLALQTLTGFFLAV), 69–90 (WMMQNLHAIGASMFFICIYIHI), 105–125 (WMSGITLLIILMATAFFGYVL), and 170–190 (FFALHFILPFAIISLSSLHVI). 2 residues coordinate heme b: His-75 and His-89. Heme b is bound by residues His-174 and His-188. His-193 contributes to the a ubiquinone binding site. A run of 4 helical transmembrane segments spans residues 218-238 (YKDLLLLTLMILSLLIIVSFF), 280-300 (LGGALALVMSIMILLTIPFTH), 312-332 (LSQLMFWTLVSTFITITWAAT), and 339-358 (FIIISQVTATLYFTFFISTP).

The protein belongs to the cytochrome b family. As to quaternary structure, the cytochrome bc1 complex contains 3 respiratory subunits (MT-CYB, CYC1 and UQCRFS1), 2 core proteins (UQCRC1 and UQCRC2) and probably 6 low-molecular weight proteins. Heme b serves as cofactor.

Its subcellular location is the mitochondrion inner membrane. Functionally, component of the ubiquinol-cytochrome c reductase complex (complex III or cytochrome b-c1 complex) that is part of the mitochondrial respiratory chain. The b-c1 complex mediates electron transfer from ubiquinol to cytochrome c. Contributes to the generation of a proton gradient across the mitochondrial membrane that is then used for ATP synthesis. The protein is Cytochrome b (MT-CYB) of Python sebae (African rock python).